The primary structure comprises 737 residues: Elongation factor 2 (737 aa).

The region spanning 18-262 (TRVRNIGIIA…TVIKFVPNPR (245 aa)) is the tr-type G domain. Residues 27–34 (AHVDHGKT), 93–97 (DTPGH), and 147–150 (NKVD) contribute to the GTP site. H604 is subject to Diphthamide.

Belongs to the TRAFAC class translation factor GTPase superfamily. Classic translation factor GTPase family. EF-G/EF-2 subfamily.

The protein localises to the cytoplasm. Functionally, catalyzes the GTP-dependent ribosomal translocation step during translation elongation. During this step, the ribosome changes from the pre-translocational (PRE) to the post-translocational (POST) state as the newly formed A-site-bound peptidyl-tRNA and P-site-bound deacylated tRNA move to the P and E sites, respectively. Catalyzes the coordinated movement of the two tRNA molecules, the mRNA and conformational changes in the ribosome. In Sulfurisphaera tokodaii (strain DSM 16993 / JCM 10545 / NBRC 100140 / 7) (Sulfolobus tokodaii), this protein is Elongation factor 2 (fusA).